The chain runs to 209 residues: MLGQKLNARKREIKNRGYLNQLKRSEQVPAVIYGKGEEAVPIILEKRELNRIFNVHGSRGLFSLEIEGESKPMMTLIREIQRNPVSGQLIHLDFLSVNLNEKINSNVGVLLGGEEEVMKKGGILQAGLKEVEVLCFPQDLPEYLSADISSLEIGETLHVADLIVPAGVEILTEAESVIASILAPSKATTGEEEGAEAAGEGEEAEEKPE.

Residues 185 to 209 (SKATTGEEEGAEAAGEGEEAEEKPE) are disordered. A compositionally biased stretch (acidic residues) spans 190–209 (GEEEGAEAAGEGEEAEEKPE).

This sequence belongs to the bacterial ribosomal protein bL25 family. CTC subfamily. Part of the 50S ribosomal subunit; part of the 5S rRNA/L5/L18/L25 subcomplex. Contacts the 5S rRNA. Binds to the 5S rRNA independently of L5 and L18.

Functionally, this is one of the proteins that binds to the 5S RNA in the ribosome where it forms part of the central protuberance. The sequence is that of Large ribosomal subunit protein bL25 from Syntrophomonas wolfei subsp. wolfei (strain DSM 2245B / Goettingen).